Consider the following 566-residue polypeptide: DNA ligase B (566 aa).

Lysine 125 acts as the N6-AMP-lysine intermediate in catalysis.

The protein belongs to the NAD-dependent DNA ligase family. LigB subfamily.

It carries out the reaction NAD(+) + (deoxyribonucleotide)n-3'-hydroxyl + 5'-phospho-(deoxyribonucleotide)m = (deoxyribonucleotide)n+m + AMP + beta-nicotinamide D-nucleotide.. Its function is as follows. Catalyzes the formation of phosphodiester linkages between 5'-phosphoryl and 3'-hydroxyl groups in double-stranded DNA using NAD as a coenzyme and as the energy source for the reaction. This is DNA ligase B from Pseudomonas putida (strain ATCC 47054 / DSM 6125 / CFBP 8728 / NCIMB 11950 / KT2440).